The following is a 1072-amino-acid chain: Netrin receptor unc-5 (1072 aa).

The first 30 residues, M1–G30, serve as a signal peptide directing secretion. Topologically, residues E31–L440 are extracellular. The disordered stretch occupies residues L77–S100. N-linked (GlcNAc...) asparagine glycosylation occurs at N79. An Ig-like domain is found at P128 to T224. Intrachain disulfides connect C149-C207, C253-C303, C336-C375, C338-C378, and C352-C364. The 83-residue stretch at K232–S314 folds into the Ig-like C2-type domain. N300 is a glycosylation site (N-linked (GlcNAc...) asparagine). 2 consecutive TSP type-1 domains span residues N324–P379 and M398–Q499. The helical transmembrane segment at L441–V461 threads the bilayer. Residues G462–I1072 are Cytoplasmic-facing. Residues S654–P802 form the ZU5 domain. Residues L980–I1067 enclose the Death domain.

It belongs to the unc-5 family. In terms of processing, phosphorylated on different cytoplasmic tyrosine residues. In terms of tissue distribution, prior to gastrulation, it is strongly expressed in the presumptive mesoderm. Mesodermal expression begins to fade during stages 13-14, persisting only in the cells that form the dorsal vessel. Expressed within the CNS from late stage 13, shortly after the first axons have extended. Detected in several dispersed clusters of cells within the CNS, increasing in number as development proceeds. Also expressed in the peripheral and exit glia, which migrate laterally out of the CNS between stages 14 and 17. Strongly expressed in motor axons that exit the CNS ipsilaterally via the segmental nerve root (SN). Not expressed on either commissural or longitudinal axons within the CNS, nor on motor axons that exit via the intersegmental nerve (ISN). In the periphery, it is detected on all branches of the SN. Also expressed at high level in exit and peripheral glia along both the SN and ISN.

The protein localises to the membrane. Its function is as follows. Receptor for netrin required for motor axon guidance. Mediates both short- and long-range axon motor repulsion in the developing nervous system upon ligand binding. Also involved in glial migration. While short-range repulsion requires both fra and unc-5, long-range repulsion only requires unc-5. This is Netrin receptor unc-5 (unc-5) from Drosophila melanogaster (Fruit fly).